A 468-amino-acid polypeptide reads, in one-letter code: 6-phospho-beta-galactosidase (468 aa).

Q19, H116, N159, E160, and N297 together coordinate D-galactose 6-phosphate. The active-site Proton donor is E160. Residue E375 is the Nucleophile of the active site. 4 residues coordinate D-galactose 6-phosphate: S428, W429, K435, and Y437.

Belongs to the glycosyl hydrolase 1 family.

The catalysed reaction is a 6-phospho-beta-D-galactoside + H2O = D-galactose 6-phosphate + an alcohol. The protein operates within carbohydrate metabolism; lactose degradation; D-galactose 6-phosphate and beta-D-glucose from lactose 6-phosphate: step 1/1. The protein is 6-phospho-beta-galactosidase of Streptococcus pyogenes serotype M6 (strain ATCC BAA-946 / MGAS10394).